Consider the following 533-residue polypeptide: Glucose-6-phosphate exchanger SLC37A1 (533 aa).

Residues 18-38 traverse the membrane as a helical segment; sequence QWYRAFIFILTFLLYASFHLS. Asn-81 carries an N-linked (GlcNAc...) asparagine glycan. The next 4 helical transmembrane spans lie at 100 to 120, 129 to 149, 157 to 177, and 222 to 242; these read GALDYSFLCAYAVGMYLSGII, YLTFGMLASGAFTALFGLGYF, FYVVTQVINGLVQTTGWPSVV, and SFVVPGAIVAAMGIVCFLFLI. The N-linked (GlcNAc...) asparagine glycan is linked to Asn-263. 7 helical membrane-spanning segments follow: residues 304 to 324, 334 to 354, 366 to 386, 394 to 414, 423 to 443, 466 to 486, and 490 to 510; these read VVILPGDGGSGTAAISFTGAL, LCLLFAKLVSYTFLFWLPLYI, GELSTLFDVGGIFGGILAGVI, ASTCGLMLLLAAPTLYIFSTV, IAMLLLSGALVSGPYTLITTA, AIIDGTGSVGAALGPLLAGLL, and GWSNVFYMLMFADACALLFLI.

Belongs to the major facilitator superfamily. Organophosphate:Pi antiporter (OPA) (TC 2.A.1.4) family. In terms of tissue distribution, expressed in numerous tissues, with highest expression in pancreas, kidney, bone marrow, spleen, liver, small intestine, as well as in fetal brain, liver and spleen.

Its subcellular location is the endoplasmic reticulum membrane. The catalysed reaction is D-glucose 6-phosphate(in) + phosphate(out) = D-glucose 6-phosphate(out) + phosphate(in). Inhibited by vanadate but not by chlorogenic acid. In terms of biological role, inorganic phosphate and glucose-6-phosphate antiporter. May transport cytoplasmic glucose-6-phosphate into the lumen of the endoplasmic reticulum and translocate inorganic phosphate into the opposite direction. Independent of a lumenal glucose-6-phosphatase. May not play a role in homeostatic regulation of blood glucose levels. The sequence is that of Glucose-6-phosphate exchanger SLC37A1 from Homo sapiens (Human).